Reading from the N-terminus, the 325-residue chain is Elongation factor P--(R)-beta-lysine ligase (325 aa).

76 to 78 (SPE) serves as a coordination point for substrate. ATP is bound by residues 100-102 (RNE) and asparagine 109. Tyrosine 118 provides a ligand contact to substrate. 244-245 (EL) contributes to the ATP binding site. Glutamate 251 lines the substrate pocket. Residue glycine 300 coordinates ATP.

This sequence belongs to the class-II aminoacyl-tRNA synthetase family. EpmA subfamily. As to quaternary structure, homodimer.

It catalyses the reaction D-beta-lysine + L-lysyl-[protein] + ATP = N(6)-((3R)-3,6-diaminohexanoyl)-L-lysyl-[protein] + AMP + diphosphate + H(+). Functionally, with EpmB is involved in the beta-lysylation step of the post-translational modification of translation elongation factor P (EF-P) on 'Lys-34'. Catalyzes the ATP-dependent activation of (R)-beta-lysine produced by EpmB, forming a lysyl-adenylate, from which the beta-lysyl moiety is then transferred to the epsilon-amino group of EF-P 'Lys-34'. This Salmonella gallinarum (strain 287/91 / NCTC 13346) protein is Elongation factor P--(R)-beta-lysine ligase.